A 295-amino-acid polypeptide reads, in one-letter code: Alpha-1A adrenergic receptor (295 aa).

The Extracellular portion of the chain corresponds to 1-27 (MVFLSGNASDSSNCTHPPAPVNISKAI). 3 N-linked (GlcNAc...) asparagine glycosylation sites follow: asparagine 7, asparagine 13, and asparagine 22. The chain crosses the membrane as a helical span at residues 28–51 (LLGVILGGLIIFGVLGNILVILSV). Residues 52–64 (ACHRHLHSVTHYY) lie on the Cytoplasmic side of the membrane. A helical membrane pass occupies residues 65–88 (IVNLAVADLLLTSTVLPFSAIFEI). Residues 89 to 99 (LGYWAFGRVFC) are Extracellular-facing. Residues cysteine 99 and cysteine 176 are joined by a disulfide bond. A helical membrane pass occupies residues 100–122 (NIWAAVDVLCCTASIMGLCIISI). Topologically, residues 123 to 143 (DRYIGVSYPLRYPTIVTQKRG) are cytoplasmic. The helical transmembrane segment at 144 to 167 (LMALLCVWALSLVISIGPLFGWRQ) threads the bilayer. The Extracellular segment spans residues 168 to 181 (PAPEDETICQITEE). The helical transmembrane segment at 182–205 (PGYVLFSALGSFYVPLTIILVMYC) threads the bilayer. Residues 206–273 (RVYVVAKRES…FSREKKAAKT (68 aa)) lie on the Cytoplasmic side of the membrane. Residue serine 215 is modified to Phosphoserine; by PKA. The chain crosses the membrane as a helical span at residues 274-295 (LGIVVGCFVLCWLPFFLVMPIG).

The protein belongs to the G-protein coupled receptor 1 family. Adrenergic receptor subfamily. ADRA1A sub-subfamily. As to quaternary structure, homo- and heterooligomer. Heterooligomerizes with ADRA1B homooligomers in cardiac myocytes. Interacts with CAVIN4.

It is found in the nucleus membrane. The protein localises to the cell membrane. The protein resides in the cytoplasm. It localises to the membrane. Its subcellular location is the caveola. In terms of biological role, this alpha-adrenergic receptor mediates its action by association with G proteins that activate a phosphatidylinositol-calcium second messenger system. Its effect is mediated by G(q) and G(11) proteins. Nuclear ADRA1A-ADRA1B heterooligomers regulate phenylephrine (PE)-stimulated ERK signaling in cardiac myocytes. The protein is Alpha-1A adrenergic receptor (ADRA1A) of Canis lupus familiaris (Dog).